The chain runs to 246 residues: E3 ubiquitin-protein ligase MARCHF2 (246 aa).

An RING-CH-type zinc finger spans residues 56–116 (DTPSDCPFCR…ELCHTEFAVE (61 aa)). Zn(2+) is bound by residues cysteine 64, cysteine 67, cysteine 80, cysteine 82, histidine 90, cysteine 93, cysteine 106, and cysteine 109. The required for interaction with IKBKG stretch occupies residues 121 to 246 (PLTEWLKDPG…LKKVAEETPV (126 aa)). A run of 2 helical transmembrane segments spans residues 138–158 (LCCD…SGWL) and 175–195 (AVGL…WTLV).

Interacts with STX6; the interaction promotes MARCHF2-mediated ubiquitination and degradation of CFTR. Interacts with MARCHF3. Interacts with GOPC/CAL; the interaction leads to CFTR ubiquitination and degradation. Interacts with CFTR; the interaction leads to CFTR ubiqtuitination and degradation. Interacts (via PDZ domain) with DLG1 (via PDZ domains); the interaction leads to DLG1 ubiqtuitination and degradation. Interacts with ERGIC3. Interacts with ADRB2. Interacts with IKBKG/NEMO; during the late stages of macrophage viral and bacterial infection; the interaction leads to ubiquitination and degradation of IKBKG/NEMO. In terms of tissue distribution, ubiquitously expressed. Present in liver (at protein level).

It is found in the endoplasmic reticulum membrane. The protein resides in the lysosome membrane. It localises to the endosome membrane. Its subcellular location is the golgi apparatus membrane. The protein localises to the cytoplasm. It is found in the cell membrane. The enzyme catalyses S-ubiquitinyl-[E2 ubiquitin-conjugating enzyme]-L-cysteine + [acceptor protein]-L-lysine = [E2 ubiquitin-conjugating enzyme]-L-cysteine + N(6)-ubiquitinyl-[acceptor protein]-L-lysine.. It participates in protein modification; protein ubiquitination. Its function is as follows. E3 ubiquitin-protein ligase that may mediate ubiquitination of TFRC and CD86, and promote their subsequent endocytosis and sorting to lysosomes via multivesicular bodies. E3 ubiquitin ligases accept ubiquitin from an E2 ubiquitin-conjugating enzyme in the form of a thioester and then directly transfer the ubiquitin to targeted substrates. Together with GOPC/CAL mediates the ubiquitination and lysosomal degradation of CFTR. Ubiquitinates and therefore mediates the degradation of DLG1. Regulates the intracellular trafficking and secretion of alpha1-antitrypsin/SERPINA1 and HP/haptoglobin via ubiquitination and degradation of the cargo receptor ERGIC3. Negatively regulates the antiviral and antibacterial immune response by repression of the NF-kB and type 1 IFN signaling pathways, via MARCHF2-mediated K48-linked polyubiquitination of IKBKG/NEMO, resulting in its proteasomal degradation. May be involved in endosomal trafficking through interaction with STX6. This is E3 ubiquitin-protein ligase MARCHF2 (Marchf2) from Rattus norvegicus (Rat).